We begin with the raw amino-acid sequence, 170 residues long: UPF0260 protein Rpal_2074 (170 aa).

Belongs to the UPF0260 family.

The sequence is that of UPF0260 protein Rpal_2074 from Rhodopseudomonas palustris (strain TIE-1).